A 364-amino-acid polypeptide reads, in one-letter code: D-alanine--D-alanine ligase (364 aa).

Residues 134-344 enclose the ATP-grasp domain; that stretch reads KVLLKSFNIP…YESLVDKLIT (211 aa). 167–222 serves as a coordination point for ATP; that stretch reads NNKLNYPVIVKPSVLGSSIGINVAYNVSQIEKYIEEAFEYDLTVVVEKFIKAREIE. Residues D297, E311, and N313 each contribute to the Mg(2+) site.

The protein belongs to the D-alanine--D-alanine ligase family. It depends on Mg(2+) as a cofactor. Mn(2+) is required as a cofactor.

The protein resides in the cytoplasm. It catalyses the reaction 2 D-alanine + ATP = D-alanyl-D-alanine + ADP + phosphate + H(+). It functions in the pathway cell wall biogenesis; peptidoglycan biosynthesis. Functionally, cell wall formation. In Borrelia recurrentis (strain A1), this protein is D-alanine--D-alanine ligase.